A 264-amino-acid chain; its full sequence is uncharacterized protein (264 aa).

The N-terminal stretch at 1–22 (MIHSKKLTLGICLVLLIILIGG) is a signal peptide. C23 carries N-palmitoyl cysteine lipidation. C23 carries the S-diacylglycerol cysteine lipid modification.

It belongs to the staphylococcal tandem lipoprotein family.

The protein localises to the cell membrane. This is an uncharacterized protein from Staphylococcus aureus (strain N315).